We begin with the raw amino-acid sequence, 828 residues long: Periplasmic nitrate reductase (828 aa).

The segment at residues 1–31 (MKLSRRSFMKANAVAAAAAAAGLSVPGVARA) is a signal peptide (tat-type signal). Residues 39–95 (IKWDKAPCRFCGTGCGVLVGTQQGRVVACQGDPDAPVNRGLNCIKGYFLPKIMYGKD) form the 4Fe-4S Mo/W bis-MGD-type domain. [4Fe-4S] cluster-binding residues include Cys46, Cys49, Cys53, and Cys81. Residues Lys83, Gln150, Asn175, Cys179, 212–219 (WGSNMAEM), 243–247 (STYQH), 262–264 (QSD), Met372, Gln376, Asn482, 508–509 (SD), Lys531, Asp558, and 718–727 (TGRVLEHWHT) contribute to the Mo-bis(molybdopterin guanine dinucleotide) site. Residue Phe794 participates in substrate binding. 2 residues coordinate Mo-bis(molybdopterin guanine dinucleotide): Asn802 and Lys819.

It belongs to the prokaryotic molybdopterin-containing oxidoreductase family. NasA/NapA/NarB subfamily. Component of the periplasmic nitrate reductase NapAB complex composed of NapA and NapB. [4Fe-4S] cluster is required as a cofactor. The cofactor is Mo-bis(molybdopterin guanine dinucleotide). Post-translationally, predicted to be exported by the Tat system. The position of the signal peptide cleavage has not been experimentally proven.

The protein resides in the periplasm. It catalyses the reaction 2 Fe(II)-[cytochrome] + nitrate + 2 H(+) = 2 Fe(III)-[cytochrome] + nitrite + H2O. Functionally, catalytic subunit of the periplasmic nitrate reductase complex NapAB. Receives electrons from NapB and catalyzes the reduction of nitrate to nitrite. The sequence is that of Periplasmic nitrate reductase from Escherichia coli O81 (strain ED1a).